The chain runs to 398 residues: Phosphoglycerate kinase (398 aa).

Residues 22-24 (DFN), R38, 61-64 (HLGR), R120, and R153 contribute to the substrate site. Residues K204, E326, and 352–355 (GGDT) contribute to the ATP site.

Belongs to the phosphoglycerate kinase family. Monomer.

It localises to the cytoplasm. It carries out the reaction (2R)-3-phosphoglycerate + ATP = (2R)-3-phospho-glyceroyl phosphate + ADP. Its pathway is carbohydrate degradation; glycolysis; pyruvate from D-glyceraldehyde 3-phosphate: step 2/5. This is Phosphoglycerate kinase from Geobacter metallireducens (strain ATCC 53774 / DSM 7210 / GS-15).